A 126-amino-acid polypeptide reads, in one-letter code: Probable prefoldin subunit 6 (126 aa).

This sequence belongs to the prefoldin subunit beta family. In terms of assembly, heterohexamer of two PFD-alpha type and four PFD-beta type subunits. Expressed in embryonic blastomeres and gonads.

It localises to the cytoplasm. Binds specifically to cytosolic chaperonin (c-CPN) and transfers target proteins to it. Binds to nascent polypeptide chain and promotes folding in an environment in which there are many competing pathways for nonnative proteins. Required for positioning of the mitotic spindle. This chain is Probable prefoldin subunit 6 (pfd-6), found in Caenorhabditis elegans.